The chain runs to 660 residues: MKAIVFAYHDIGCAGLKALTDAGYDIQAVFTHTDDPGENNFFSSVARVGAELELPVYAPEDVNHPLWIERIREMQPDIIFSFYYRNMLSEELLSLAPKGGFNLHGSLLPHYRGRAPVNWALVNGETETGATLHKMVKRPDAGDIVGQHKVAIAANDTALTLHKKVLEAAQALLKEQLPKLKNGTASFTRQNEAEASYFGRRTAADGEILWHKSAQEINNLVRAVTEPYPGAFSYLGQRKLIVWRARVLDTRHDKQPGTVLSTSPLIIACGEGALEIVAGQNDVGLYVQGSRLAQEMGIVTDVRLAAKPNAVMKRRTRVLILGVNGFIGNHLTERLLRDDRYDIYGLDIGSDAISRFLGNPRFHFVEGDISIHSEWIEYHIKKCDVILPLVAIATPIEYTRNPLRVFELDFEENLKIVRDCVKYNKRIIFPSTSEVYGMCDDKEFDEDHSRLIVGPINKQRWIYSVSKQLLDRVIWAYGAKEGLKFTLFRPFNWMGPRLDNLDAARIGSSRAITQLILNLVEGSPIKLMDGGAQKRCFTDINDGIEALFRIIENRDGLCDGQIVNIGNPTNEASIRELAEMLLESFNNHPLRDRFPPFAGFKDVESSSYYGKGYQDVEHRTPSIKNARRLLDWQPTIAMQQTVADTLDYFLRTTVQEGDGA.

The formyltransferase ArnAFT stretch occupies residues 1–304 (MKAIVFAYHD…EMGIVTDVRL (304 aa)). Histidine 104 acts as the Proton donor; for formyltransferase activity in catalysis. (6R)-10-formyltetrahydrofolate contacts are provided by residues arginine 114 and 136-140 (VKRPD). Residues 314 to 660 (RRTRVLILGV…RTTVQEGDGA (347 aa)) are dehydrogenase ArnADH. Residues aspartate 347 and 368-369 (DI) each bind NAD(+). UDP-alpha-D-glucuronate contacts are provided by residues alanine 393, tyrosine 398, and 432 to 433 (TS). Glutamate 434 acts as the Proton acceptor; for decarboxylase activity in catalysis. Residues arginine 460, asparagine 492, 526 to 535 (KLMDGGAQKR), and tyrosine 613 each bind UDP-alpha-D-glucuronate. Residue arginine 619 is the Proton donor; for decarboxylase activity of the active site.

This sequence in the N-terminal section; belongs to the Fmt family. UDP-L-Ara4N formyltransferase subfamily. It in the C-terminal section; belongs to the NAD(P)-dependent epimerase/dehydratase family. UDP-glucuronic acid decarboxylase subfamily. As to quaternary structure, homohexamer, formed by a dimer of trimers.

The catalysed reaction is UDP-alpha-D-glucuronate + NAD(+) = UDP-beta-L-threo-pentopyranos-4-ulose + CO2 + NADH. The enzyme catalyses UDP-4-amino-4-deoxy-beta-L-arabinose + (6R)-10-formyltetrahydrofolate = UDP-4-deoxy-4-formamido-beta-L-arabinose + (6S)-5,6,7,8-tetrahydrofolate + H(+). Its pathway is nucleotide-sugar biosynthesis; UDP-4-deoxy-4-formamido-beta-L-arabinose biosynthesis; UDP-4-deoxy-4-formamido-beta-L-arabinose from UDP-alpha-D-glucuronate: step 1/3. It functions in the pathway nucleotide-sugar biosynthesis; UDP-4-deoxy-4-formamido-beta-L-arabinose biosynthesis; UDP-4-deoxy-4-formamido-beta-L-arabinose from UDP-alpha-D-glucuronate: step 3/3. It participates in bacterial outer membrane biogenesis; lipopolysaccharide biosynthesis. Bifunctional enzyme that catalyzes the oxidative decarboxylation of UDP-glucuronic acid (UDP-GlcUA) to UDP-4-keto-arabinose (UDP-Ara4O) and the addition of a formyl group to UDP-4-amino-4-deoxy-L-arabinose (UDP-L-Ara4N) to form UDP-L-4-formamido-arabinose (UDP-L-Ara4FN). The modified arabinose is attached to lipid A and is required for resistance to polymyxin and cationic antimicrobial peptides. The chain is Bifunctional polymyxin resistance protein ArnA from Serratia proteamaculans (strain 568).